We begin with the raw amino-acid sequence, 396 residues long: S-adenosylmethionine synthase (396 aa).

Position 16 (His-16) interacts with ATP. Asp-18 is a binding site for Mg(2+). Glu-44 is a binding site for K(+). L-methionine-binding residues include Glu-57 and Gln-100. The segment at 100 to 110 (QSVDIAQGVDR) is flexible loop. Residues 165–167 (DAK), Asp-240, 246–247 (RK), Ala-263, and Lys-267 contribute to the ATP site. Asp-240 contributes to the L-methionine binding site. Lys-271 is a binding site for L-methionine.

It belongs to the AdoMet synthase family. Homotetramer; dimer of dimers. Mg(2+) is required as a cofactor. The cofactor is K(+).

It localises to the cytoplasm. The enzyme catalyses L-methionine + ATP + H2O = S-adenosyl-L-methionine + phosphate + diphosphate. Its pathway is amino-acid biosynthesis; S-adenosyl-L-methionine biosynthesis; S-adenosyl-L-methionine from L-methionine: step 1/1. Catalyzes the formation of S-adenosylmethionine (AdoMet) from methionine and ATP. The overall synthetic reaction is composed of two sequential steps, AdoMet formation and the subsequent tripolyphosphate hydrolysis which occurs prior to release of AdoMet from the enzyme. This chain is S-adenosylmethionine synthase, found in Pseudomonas syringae pv. tomato (strain ATCC BAA-871 / DC3000).